Here is a 173-residue protein sequence, read N- to C-terminus: MKILKPITFRKPRIISQKKVLRSKLSKVKKSPWYKAKKNYVSFRQRLVLAKKNPNKKRYYLFFSKKRNNVFLTITDVIGRVVVSQSAGSCKITTKKKKRSPDTLKTVSASVAKIARAKNIKYLFKFFMNTNQTKIGKTIFESFKKTGLFILQGVVVKNKSHGLLMRKKKAKRL.

It belongs to the universal ribosomal protein uS11 family.

Its subcellular location is the mitochondrion. This chain is Small ribosomal subunit protein uS11m (RPS11), found in Acanthamoeba castellanii (Amoeba).